A 362-amino-acid polypeptide reads, in one-letter code: Aminomethyltransferase (362 aa).

It belongs to the GcvT family. In terms of assembly, the glycine cleavage system is composed of four proteins: P, T, L and H.

It catalyses the reaction N(6)-[(R)-S(8)-aminomethyldihydrolipoyl]-L-lysyl-[protein] + (6S)-5,6,7,8-tetrahydrofolate = N(6)-[(R)-dihydrolipoyl]-L-lysyl-[protein] + (6R)-5,10-methylene-5,6,7,8-tetrahydrofolate + NH4(+). In terms of biological role, the glycine cleavage system catalyzes the degradation of glycine. The polypeptide is Aminomethyltransferase (Colwellia psychrerythraea (strain 34H / ATCC BAA-681) (Vibrio psychroerythus)).